A 500-amino-acid polypeptide reads, in one-letter code: Signal transduction histidine-protein kinase/phosphatase UhpB (500 aa).

A run of 8 helical transmembrane segments spans residues 8–28, 78–98, 112–132, 140–160, 185–205, 207–224, 231–249, and 253–273; these read LITV…LWSI, VALA…LPVA, LLLQ…PWLG, ALLL…VFWH, HLIW…GLPA, LSRF…ALAW, ALIA…QTWH, and VDLL…GAGI. Over 274 to 500 the chain is Cytoplasmic; it reads QRLRELNQSL…VSVSLPQRYV (227 aa). The Histidine kinase domain occupies 311 to 499; it reads ELHDDIGQTI…RVSVSLPQRY (189 aa). Residue H313 is modified to Phosphohistidine; by autocatalysis.

Post-translationally, autophosphorylated.

Its subcellular location is the cell inner membrane. It catalyses the reaction ATP + protein L-histidine = ADP + protein N-phospho-L-histidine.. Part of the UhpABC signaling cascade that controls the expression of the hexose phosphate transporter UhpT. UhpB functions as a membrane-associated protein kinase that autophosphorylates in response to interaction with UhpC, and subsequently transfers its phosphate group to the response regulator UhpA. Can also dephosphorylate UhpA. This Salmonella typhimurium (strain LT2 / SGSC1412 / ATCC 700720) protein is Signal transduction histidine-protein kinase/phosphatase UhpB (uhpB).